The following is a 272-amino-acid chain: Zinc finger protein 32 (272 aa).

Positions 50–65 (RREKLEQKSPESKALQ) are enriched in basic and acidic residues. Residues 50-69 (RREKLEQKSPESKALQEDSP) form a disordered region. C2H2-type zinc fingers lie at residues 76–98 (YDCQ…ERIH), 104–126 (FECT…QRIH), and 132–154 (YQCK…ERLH). Zn(2+) is bound by residues Cys-78, Cys-81, His-94, His-98, Cys-106, Cys-109, His-122, His-126, Ser-140, Gln-143, Gly-156, Tyr-160, Phe-197, Lys-200, Leu-213, Ala-217, Cys-246, Cys-249, His-262, and Cys-266. C2H2-type zinc fingers lie at residues 160–182 (YECA…RRVH) and 188–210 (YRCD…IRVH). Residues 216–238 (YACSHCRKSFHTRGNCLLHGKVH) form a C2H2-type 6 zinc finger. Residues 244-266 (YLCGQCGKSFTQRGSLAVHQRSC) form a CCHC-type zinc finger.

The protein belongs to the krueppel C2H2-type zinc-finger protein family.

The protein localises to the nucleus. May be involved in transcriptional regulation. The polypeptide is Zinc finger protein 32 (Znf32) (Mus musculus (Mouse)).